The sequence spans 179 residues: Large ribosomal subunit protein eL18 (179 aa).

This sequence belongs to the eukaryotic ribosomal protein eL18 family. As to quaternary structure, component of the large ribosomal subunit.

The protein localises to the cytoplasm. The protein resides in the cytosol. It localises to the rough endoplasmic reticulum. Functionally, component of the large ribosomal subunit. The ribosome is a large ribonucleoprotein complex responsible for the synthesis of proteins in the cell. This chain is Large ribosomal subunit protein eL18 (rpl18), found in Salmo salar (Atlantic salmon).